We begin with the raw amino-acid sequence, 126 residues long: MNVVKSLCILGLVLVSLIATQAADEQVVGGVSQLEGNSRKEALELLDATLAQLATGDGPSYKAINVTSVTGQVVAGSLNTYEVELDNGSDKKQCTVKIWTQPWLKENGTNIKIKCSGDDGELDRTW.

The short motif at 72 to 76 is the Secondary area of contact element; that stretch reads QVVAG. Cysteines 94 and 115 form a disulfide.

This sequence belongs to the cystatin family.

The protein is Cystatin-like protein (Cys) of Drosophila melanogaster (Fruit fly).